We begin with the raw amino-acid sequence, 287 residues long: Deoxyuridine 5'-triphosphate nucleotidohydrolase (287 aa).

A substrate-binding site is contributed by 173–175 (RSG). Low complexity predominate over residues 264–275 (SSSKDTSDSQMS). Residues 264–287 (SSSKDTSDSQMSRGDAGLGSSGLM) form a disordered region.

The protein belongs to the dUTPase family. Mg(2+) is required as a cofactor.

It catalyses the reaction dUTP + H2O = dUMP + diphosphate + H(+). In terms of biological role, involved in nucleotide metabolism: produces dUMP, the immediate precursor of thymidine nucleotides and decreases the intracellular concentration of dUTP to avoid uracil incorporation into viral DNA. This Saimiriine herpesvirus 2 (strain 11) (SaHV-2) protein is Deoxyuridine 5'-triphosphate nucleotidohydrolase.